Here is a 274-residue protein sequence, read N- to C-terminus: MGIRKLKPTTPGQRHKVIGAFDKITASTPEKSLVVGKKKTGGRNNTGKMTMRYIGGGHKQKYRFIDFKRTKDGIPATVKTIEYDPNRSSRIALLYYADGAKAYIIAPDGLEVGHTVMSGSEAAPEVGNALPLANIPVGTIIHNIELRPGQGAKMVRSAGSFAQLTSREGTYVVIKMPSGEVRRILSTCKATIGSVGNSDHALEKSGKAGRSRWLGRRPHNRGVVMNPVDHPMGGGEGRQSGGHPRSRKGLYAKGLKTRAPKKHSSKYIIERRKK.

Residues 197–274 (NSDHALEKSG…SKYIIERRKK (78 aa)) form a disordered region. Composition is skewed to basic residues over residues 207 to 220 (KAGRSRWLGRRPHN) and 244 to 274 (PRSRKGLYAKGLKTRAPKKHSSKYIIERRKK).

It belongs to the universal ribosomal protein uL2 family. In terms of assembly, part of the 50S ribosomal subunit. Forms a bridge to the 30S subunit in the 70S ribosome.

In terms of biological role, one of the primary rRNA binding proteins. Required for association of the 30S and 50S subunits to form the 70S ribosome, for tRNA binding and peptide bond formation. It has been suggested to have peptidyltransferase activity; this is somewhat controversial. Makes several contacts with the 16S rRNA in the 70S ribosome. The protein is Large ribosomal subunit protein uL2 of Porphyromonas gingivalis (strain ATCC BAA-308 / W83).